The following is a 408-amino-acid chain: Peptidase T (408 aa).

Zn(2+) is bound at residue His78. Asp80 is an active-site residue. Residue Asp140 participates in Zn(2+) binding. Glu173 functions as the Proton acceptor in the catalytic mechanism. Positions 174, 196, and 379 each coordinate Zn(2+).

Belongs to the peptidase M20B family. Zn(2+) serves as cofactor.

It localises to the cytoplasm. The enzyme catalyses Release of the N-terminal residue from a tripeptide.. Its function is as follows. Cleaves the N-terminal amino acid of tripeptides. The polypeptide is Peptidase T (Escherichia fergusonii (strain ATCC 35469 / DSM 13698 / CCUG 18766 / IAM 14443 / JCM 21226 / LMG 7866 / NBRC 102419 / NCTC 12128 / CDC 0568-73)).